A 511-amino-acid chain; its full sequence is 2-isopropylmalate synthase (511 aa).

The Pyruvate carboxyltransferase domain maps to 5 to 267 (IQIFDTTLRD…ESQINLEETK (263 aa)). Mn(2+) contacts are provided by D14, H202, H204, and N238. A regulatory domain region spans residues 391–511 (QLDNLQLQYV…EYELKEGIRT (121 aa)).

The protein belongs to the alpha-IPM synthase/homocitrate synthase family. LeuA type 1 subfamily. In terms of assembly, homodimer. Mn(2+) is required as a cofactor.

Its subcellular location is the cytoplasm. It catalyses the reaction 3-methyl-2-oxobutanoate + acetyl-CoA + H2O = (2S)-2-isopropylmalate + CoA + H(+). The protein operates within amino-acid biosynthesis; L-leucine biosynthesis; L-leucine from 3-methyl-2-oxobutanoate: step 1/4. In terms of biological role, catalyzes the condensation of the acetyl group of acetyl-CoA with 3-methyl-2-oxobutanoate (2-ketoisovalerate) to form 3-carboxy-3-hydroxy-4-methylpentanoate (2-isopropylmalate). The sequence is that of 2-isopropylmalate synthase from Staphylococcus epidermidis (strain ATCC 35984 / DSM 28319 / BCRC 17069 / CCUG 31568 / BM 3577 / RP62A).